Reading from the N-terminus, the 88-residue chain is Large ribosomal subunit protein bL27 (88 aa).

The protein belongs to the bacterial ribosomal protein bL27 family.

The chain is Large ribosomal subunit protein bL27 from Parabacteroides distasonis (strain ATCC 8503 / DSM 20701 / CIP 104284 / JCM 5825 / NCTC 11152).